Here is a 499-residue protein sequence, read N- to C-terminus: Ribulose bisphosphate carboxylase large chain (499 aa).

2 residues coordinate substrate: Asn-139 and Thr-189. Lys-191 serves as the catalytic Proton acceptor. Position 193 (Lys-193) interacts with substrate. The Mg(2+) site is built by Lys-217, Asp-219, and Glu-220. Lys-217 bears the N6-carboxylysine mark. The active-site Proton acceptor is His-309. The substrate site is built by Arg-310, His-342, and Ser-394.

It belongs to the RuBisCO large chain family. Type I subfamily. Heterohexadecamer of 8 large chains and 8 small chains. Mg(2+) is required as a cofactor.

The catalysed reaction is 2 (2R)-3-phosphoglycerate + 2 H(+) = D-ribulose 1,5-bisphosphate + CO2 + H2O. The enzyme catalyses D-ribulose 1,5-bisphosphate + O2 = 2-phosphoglycolate + (2R)-3-phosphoglycerate + 2 H(+). RuBisCO catalyzes two reactions: the carboxylation of D-ribulose 1,5-bisphosphate, the primary event in carbon dioxide fixation, as well as the oxidative fragmentation of the pentose substrate. Both reactions occur simultaneously and in competition at the same active site. In Paraburkholderia xenovorans (strain LB400), this protein is Ribulose bisphosphate carboxylase large chain.